Reading from the N-terminus, the 291-residue chain is 33 kDa chaperonin (291 aa).

Intrachain disulfides connect cysteine 235/cysteine 237 and cysteine 268/cysteine 271.

It belongs to the HSP33 family. In terms of processing, under oxidizing conditions two disulfide bonds are formed involving the reactive cysteines. Under reducing conditions zinc is bound to the reactive cysteines and the protein is inactive.

The protein localises to the cytoplasm. Functionally, redox regulated molecular chaperone. Protects both thermally unfolding and oxidatively damaged proteins from irreversible aggregation. Plays an important role in the bacterial defense system toward oxidative stress. In Bacillus subtilis (strain 168), this protein is 33 kDa chaperonin.